The sequence spans 278 residues: Bis(5'-nucleosyl)-tetraphosphatase, symmetrical (278 aa).

It belongs to the Ap4A hydrolase family.

The catalysed reaction is P(1),P(4)-bis(5'-adenosyl) tetraphosphate + H2O = 2 ADP + 2 H(+). Functionally, hydrolyzes diadenosine 5',5'''-P1,P4-tetraphosphate to yield ADP. The protein is Bis(5'-nucleosyl)-tetraphosphatase, symmetrical of Buchnera aphidicola subsp. Baizongia pistaciae (strain Bp).